We begin with the raw amino-acid sequence, 213 residues long: Thymidylate kinase (213 aa).

Residue 11–18 (GPDGAGKT) participates in ATP binding.

This sequence belongs to the thymidylate kinase family.

The catalysed reaction is dTMP + ATP = dTDP + ADP. Functionally, phosphorylation of dTMP to form dTDP in both de novo and salvage pathways of dTTP synthesis. In Oenococcus oeni (strain ATCC BAA-331 / PSU-1), this protein is Thymidylate kinase.